Here is a 108-residue protein sequence, read N- to C-terminus: Heme-degrading monooxygenase HmoA (108 aa).

In terms of domain architecture, ABM spans 2 to 95 (FVQLRKMTVK…DYLISTEVSM (94 aa)). Histidine 76 provides a ligand contact to heme.

Belongs to the antibiotic biosynthesis monooxygenase family. As to quaternary structure, homodimer.

It is found in the cytoplasm. It catalyses the reaction heme b + 3 reduced [NADPH--hemoprotein reductase] + 3 O2 = biliverdin IXalpha + CO + Fe(2+) + 3 oxidized [NADPH--hemoprotein reductase] + 3 H2O + H(+). Its function is as follows. Allows bacterial pathogens to use the host heme as an iron source. Catalyzes the oxidative degradation of the heme macrocyclic porphyrin ring in the presence of a suitable electron donor such as ascorbate or NADPH--cytochrome P450 reductase, with subsequent release of free iron. In Bacillus subtilis (strain 168), this protein is Heme-degrading monooxygenase HmoA (hmoA).